The chain runs to 156 residues: Jun dimerization protein 2 (156 aa).

Residues 56-95 (KRPFDAIKSEDDDDDERKKRRREKNKVAAARCRNRKKERT) form a disordered region. Positions 70-133 (DERKKRRREK…QQLIVMLNLH (64 aa)) constitute a bZIP domain. The basic motif stretch occupies residues 72–94 (RKKRRREKNKVAAARCRNRKKER). The leucine-zipper stretch occupies residues 98–126 (LQKESERLEMLNSDLKSQIEELKSERQQL).

It belongs to the bZIP family. ATF subfamily.

Its subcellular location is the nucleus. Its function is as follows. Component of the AP-1 transcription factor that represses transactivation mediated by the Jun family of proteins. This chain is Jun dimerization protein 2 (jdp2), found in Danio rerio (Zebrafish).